A 584-amino-acid chain; its full sequence is Sodium/calcium exchanger NCL1 (584 aa).

A run of 5 helical transmembrane segments spans residues F77–L97, L120–V140, V154–G174, A215–L235, and V245–F265. EF-hand domains lie at P305–E340 and D345–E380. D318, D320, S322, T324, E329, D358, S360, N362, and E369 together coordinate Ca(2+). Transmembrane regions (helical) follow at residues W426–A446, F466–I486, Y504–I524, F531–F551, and L561–F581.

This sequence belongs to the Ca(2+):cation antiporter (CaCA) (TC 2.A.19) family.

The protein localises to the cell membrane. In terms of biological role, may function as a sodium/calcium exchanger (NCX) and participate in the maintenance of calcium homeostasis. May play a role abiotic stress responses. The protein is Sodium/calcium exchanger NCL1 of Oryza sativa subsp. japonica (Rice).